A 1355-amino-acid polypeptide reads, in one-letter code: Patatin-like phospholipase domain-containing protein 6 (1355 aa).

Residues 1 to 43 are Lumenal-facing; it reads MGTPSHELNTTSSGAEVIQKTLEEGLGRRICVAQPVPFVPQVL. Asn-9 carries an N-linked (GlcNAc...) asparagine glycan. A helical membrane pass occupies residues 44 to 64; the sequence is GVMIGAGVAVLVTAVLILLVV. The Cytoplasmic portion of the chain corresponds to 65–1355; sequence RRLRVQKTPA…QETPSSVADA (1291 aa). 179 to 306 contacts a nucleoside 3',5'-cyclic phosphate; the sequence is VLGHFEKPLF…VRVVQIIMVR (128 aa). Ser-338 is modified (phosphoserine). The interval 338–395 is disordered; that stretch reads SPGLPTRTSPVRGSKRVVSTSGTEDTSKETSGRPLDSIGAPLPGPAGDPVKPTSLEAP. Residues 343–361 are compositionally biased toward polar residues; the sequence is TRTSPVRGSKRVVSTSGTE. Phosphothreonine is present on Thr-345. Phosphoserine is present on residues Ser-346, Ser-356, and Ser-405. A nucleoside 3',5'-cyclic phosphate-binding positions include 492-614 and 610-730; these read ELAK…VAAR and TVAA…LSQK. The 167-residue stretch at 961-1127 folds into the PNPLA domain; it reads LVLGGGGARG…INNLPADIAR (167 aa). The GXGXXG motif lies at 965-970; it reads GGGARG. The GXSXG signature appears at 992–996; it reads GTSIG. The Nucleophile role is filled by Ser-994. Asp-1114 acts as the Proton acceptor in catalysis. The short motif at 1114–1116 is the DGA/G element; sequence DGG. Residues 1286–1355 form a disordered region; sequence SYVSDGCADG…QETPSSVADA (70 aa). Acidic residues predominate over residues 1293 to 1309; the sequence is ADGEESDCLTEYEEDAG.

Belongs to the NTE family. In terms of processing, glycosylated. In terms of tissue distribution, expressed in brain, testes and kidney (at protein level). Expressed ubiquitously in brain of young mice. Reaching adulthood, there is a most prominent expression in Purkinje cells, granule cells and pyramidal neurons of the hippocampus and some large neurons in the medulla oblongata, nucleus dentatus and pons.

The protein localises to the endoplasmic reticulum membrane. The enzyme catalyses a 1-acyl-sn-glycero-3-phosphocholine + H2O = sn-glycerol 3-phosphocholine + a fatty acid + H(+). The catalysed reaction is 1-hexadecanoyl-sn-glycero-3-phosphocholine + H2O = sn-glycerol 3-phosphocholine + hexadecanoate + H(+). It catalyses the reaction 1-hexadecanoyl-sn-glycero-3-phosphate + H2O = sn-glycerol 3-phosphate + hexadecanoate + H(+). It carries out the reaction 1-(9Z-octadecenoyl)-sn-glycero-3-phosphocholine + H2O = sn-glycerol 3-phosphocholine + (9Z)-octadecenoate + H(+). The enzyme catalyses 1-hexadecanoylglycerol + H2O = glycerol + hexadecanoate + H(+). The catalysed reaction is 2-hexadecanoylglycerol + H2O = glycerol + hexadecanoate + H(+). It catalyses the reaction 1-(9Z-octadecenoyl)-glycerol + H2O = glycerol + (9Z)-octadecenoate + H(+). It carries out the reaction 2-(9Z-octadecenoyl)-glycerol + H2O = glycerol + (9Z)-octadecenoate + H(+). The enzyme catalyses 2-(5Z,8Z,11Z,14Z-eicosatetraenoyl)-glycerol + H2O = glycerol + (5Z,8Z,11Z,14Z)-eicosatetraenoate + H(+). Inhibited by a series a OPs such as mipafox (MPX), phenyl saligenin phosphate (PSP), phenyl dipentyl phosphinate (PDPP), diisopropyl fluorophosphate and paraoxon. Phospholipase B that deacylates intracellular phosphatidylcholine (PtdCho), generating glycerophosphocholine (GroPtdCho). This deacylation occurs at both sn-2 and sn-1 positions of PtdCho. Catalyzes the hydrolysis of several naturally occurring membrane-associated lipids. Hydrolyzes lysophospholipids and monoacylglycerols, preferring the 1-acyl to the 2-acyl isomer. Does not catalyze hydrolysis of di- or triacylglycerols or fatty acid amides. In Mus musculus (Mouse), this protein is Patatin-like phospholipase domain-containing protein 6 (Pnpla6).